Here is a 162-residue protein sequence, read N- to C-terminus: L-amino acid N-acetyltransferase AaaT (162 aa).

The 159-residue stretch at 4–162 folds into the N-acetyltransferase domain; sequence IVIRHAETRD…VDAYYMARVK (159 aa).

This sequence belongs to the acetyltransferase family.

It catalyses the reaction L-phenylalanine + acetyl-CoA = N-acetyl-L-phenylalanine + CoA + H(+). The enzyme catalyses L-methionine + acetyl-CoA = N-acetyl-L-methionine + CoA + H(+). In terms of biological role, catalyzes the N-acetylation of L-phenylalanine and L-methionine using acetyl-CoA as acetyl donor in vitro. Cannot accept L-tyrosine as substrate and propionyl-CoA, succinyl-CoA or (S)-methylmalonyl-CoA as acyl donors. Is also able to acetylate and thus detoxify several nonhydrolyzable aminoacyl adenylates, but not the processed form of the peptide-nucleotide antibiotic microcin C (McC). When overproduced, provides complete resistance to leucyl sulfamoyl adenylate (LSA) and partial resistance to alanyl sulfamoyl adenylate (ASA) and phenylalanyl sulfamoyl adenylate (FSA). Therefore, may protect bacteria from various toxic aminoacyl nucleotides, either exogenous or those generated inside the cell during normal metabolism. This Escherichia coli (strain K12) protein is L-amino acid N-acetyltransferase AaaT.